Consider the following 487-residue polypeptide: MKAQPKASHFIGGAFVEDKAGKPPPVIYPATDEEIASLYSATPGIIEAAYAAALKAQGEWAALKPVERGRILRRTAEILREKNRKLSKLETLDTGKALQETLVADAASAADALEFFGGIISGFNGEFVELGGSFAYTRREALGICVGIGAWNYPIQIAAWKSAPALAMGNAFIFKPSENTPLSALALAEAYKEAGLPDGLFNVVQGYGDVGAALVNHRLTAKVSLTGSVPTGRRIMAQAGEQLKHVTMELGGKSPLIVFDDADLESAIGGAMLGNFYSTGQVCSNGTRVFVHKNIRERFIERLVERTRKIRIGDPFDEATQMGPLISAAQRDKVLSYIKKGKAEGATLACGGGVPKLQGFDKGFFIEPTVFADVTDTMTIAREEIFGPVMSVLEFSDEDEVIARANDSEFGLAAGVFTADLSRGHHVIGQIKAGTCWINAYNLTPVEVPFGGYKQSGIGRENGIAALAHYSQIKTVYVEMGKVDSPY.

Positions 27 and 93 each coordinate K(+). NAD(+) is bound at residue 149-151; it reads GAW. Residue K161 is the Charge relay system of the active site. NAD(+) is bound by residues 175-178 and 228-231; these read KPSE and SVPT. L243 serves as a coordination point for K(+). The active-site Proton acceptor is E249. 3 residues coordinate NAD(+): G251, C283, and E384. Residue C283 is the Nucleophile of the active site. C283 bears the Cysteine sulfenic acid (-SOH) mark. K(+) contacts are provided by K454 and G457. Catalysis depends on E461, which acts as the Charge relay system.

It belongs to the aldehyde dehydrogenase family. As to quaternary structure, dimer of dimers. K(+) is required as a cofactor.

The catalysed reaction is betaine aldehyde + NAD(+) + H2O = glycine betaine + NADH + 2 H(+). Its pathway is amine and polyamine biosynthesis; betaine biosynthesis via choline pathway; betaine from betaine aldehyde: step 1/1. Its function is as follows. Involved in the biosynthesis of the osmoprotectant glycine betaine. Catalyzes the irreversible oxidation of betaine aldehyde to the corresponding acid. The sequence is that of Betaine aldehyde dehydrogenase from Brucella suis (strain ATCC 23445 / NCTC 10510).